A 347-amino-acid chain; its full sequence is Protein RecA (347 aa).

An ATP-binding site is contributed by 65-72 (GPESSGKT).

The protein belongs to the RecA family.

Its subcellular location is the cytoplasm. Its function is as follows. Can catalyze the hydrolysis of ATP in the presence of single-stranded DNA, the ATP-dependent uptake of single-stranded DNA by duplex DNA, and the ATP-dependent hybridization of homologous single-stranded DNAs. It interacts with LexA causing its activation and leading to its autocatalytic cleavage. The protein is Protein RecA of Aliivibrio salmonicida (strain LFI1238) (Vibrio salmonicida (strain LFI1238)).